Consider the following 65-residue polypeptide: MNSTIWLALALVLVLEGLGPMLYPKAWKKMISAMTNLPDNILRRFGGGLVVAGVVVYYMLRKTIG.

The next 2 membrane-spanning stretches (helical) occupy residues 4 to 24 (TIWL…MLYP) and 45 to 65 (FGGG…KTIG).

It is found in the cell membrane. This is an uncharacterized protein from Escherichia coli O157:H7.